A 209-amino-acid polypeptide reads, in one-letter code: Auxin-binding protein ABP19b (209 aa).

Positions 1–18 are cleaved as a signal peptide; it reads MIFPIFFTFFLLLSTSHA. The cysteines at positions 24 and 39 are disulfide-linked. In terms of domain architecture, Cupin type-1 spans 53 to 199; the sequence is SGLGIAGNTT…TTLLDAPQIK (147 aa). The N-linked (GlcNAc...) asparagine glycan is linked to Asn60. Positions 101, 103, 108, and 147 each coordinate Mn(2+).

Belongs to the germin family. As to quaternary structure, interacts with ABP20.

It localises to the secreted. Its subcellular location is the extracellular space. It is found in the apoplast. The protein localises to the cell wall. Its function is as follows. Probable receptor for the plant growth-promoting hormone auxin. This is Auxin-binding protein ABP19b (ABP19B) from Prunus persica (Peach).